The sequence spans 268 residues: Shikimate dehydrogenase (NADP(+)) (268 aa).

Shikimate-binding positions include S14–S16 and T61. The Proton acceptor role is filled by K65. Positions 86 and 102 each coordinate shikimate. Residues G126–A130, N149–K154, and M213 each bind NADP(+). Y215 is a binding site for shikimate. G238 contacts NADP(+).

It belongs to the shikimate dehydrogenase family. Homodimer.

The catalysed reaction is shikimate + NADP(+) = 3-dehydroshikimate + NADPH + H(+). Its pathway is metabolic intermediate biosynthesis; chorismate biosynthesis; chorismate from D-erythrose 4-phosphate and phosphoenolpyruvate: step 4/7. Its function is as follows. Involved in the biosynthesis of the chorismate, which leads to the biosynthesis of aromatic amino acids. Catalyzes the reversible NADPH linked reduction of 3-dehydroshikimate (DHSA) to yield shikimate (SA). This is Shikimate dehydrogenase (NADP(+)) from Haemophilus influenzae (strain PittEE).